The sequence spans 150 residues: Small ribosomal subunit protein eS6 (150 aa).

Belongs to the eukaryotic ribosomal protein eS6 family.

The polypeptide is Small ribosomal subunit protein eS6 (Caldivirga maquilingensis (strain ATCC 700844 / DSM 13496 / JCM 10307 / IC-167)).